Consider the following 619-residue polypeptide: 1-deoxy-D-xylulose-5-phosphate synthase (619 aa).

Residues H80 and 121-123 (GHS) each bind thiamine diphosphate. D152 contributes to the Mg(2+) binding site. Residues 153–154 (GA), N181, Y288, and E370 each bind thiamine diphosphate. N181 contacts Mg(2+).

It belongs to the transketolase family. DXPS subfamily. In terms of assembly, homodimer. The cofactor is Mg(2+). It depends on thiamine diphosphate as a cofactor.

It carries out the reaction D-glyceraldehyde 3-phosphate + pyruvate + H(+) = 1-deoxy-D-xylulose 5-phosphate + CO2. The protein operates within metabolic intermediate biosynthesis; 1-deoxy-D-xylulose 5-phosphate biosynthesis; 1-deoxy-D-xylulose 5-phosphate from D-glyceraldehyde 3-phosphate and pyruvate: step 1/1. Functionally, catalyzes the acyloin condensation reaction between C atoms 2 and 3 of pyruvate and glyceraldehyde 3-phosphate to yield 1-deoxy-D-xylulose-5-phosphate (DXP). In Yersinia pestis (strain Pestoides F), this protein is 1-deoxy-D-xylulose-5-phosphate synthase.